Consider the following 203-residue polypeptide: Glycerol-3-phosphate acyltransferase (203 aa).

A run of 6 helical transmembrane segments spans residues 5-25, 50-70, 72-92, 115-135, 140-160, and 162-182; these read IASI…FSLL, TCGF…GALP, IAAQ…TAAM, VVLT…AVTF, ISAV…AVLL, and LGML…AIVF.

It belongs to the PlsY family. In terms of assembly, probably interacts with PlsX.

The protein resides in the cell membrane. It catalyses the reaction an acyl phosphate + sn-glycerol 3-phosphate = a 1-acyl-sn-glycero-3-phosphate + phosphate. The protein operates within lipid metabolism; phospholipid metabolism. In terms of biological role, catalyzes the transfer of an acyl group from acyl-phosphate (acyl-PO(4)) to glycerol-3-phosphate (G3P) to form lysophosphatidic acid (LPA). This enzyme utilizes acyl-phosphate as fatty acyl donor, but not acyl-CoA or acyl-ACP. This is Glycerol-3-phosphate acyltransferase from Roseiflexus sp. (strain RS-1).